The chain runs to 63 residues: Large ribosomal subunit protein uL29 (63 aa).

The protein belongs to the universal ribosomal protein uL29 family.

This is Large ribosomal subunit protein uL29 from Psychromonas ingrahamii (strain DSM 17664 / CCUG 51855 / 37).